The chain runs to 285 residues: Bifunctional protein FolD (285 aa).

Residue 166–168 (GAS) participates in NADP(+) binding.

This sequence belongs to the tetrahydrofolate dehydrogenase/cyclohydrolase family. Homodimer.

It catalyses the reaction (6R)-5,10-methylene-5,6,7,8-tetrahydrofolate + NADP(+) = (6R)-5,10-methenyltetrahydrofolate + NADPH. The enzyme catalyses (6R)-5,10-methenyltetrahydrofolate + H2O = (6R)-10-formyltetrahydrofolate + H(+). It participates in one-carbon metabolism; tetrahydrofolate interconversion. In terms of biological role, catalyzes the oxidation of 5,10-methylenetetrahydrofolate to 5,10-methenyltetrahydrofolate and then the hydrolysis of 5,10-methenyltetrahydrofolate to 10-formyltetrahydrofolate. This chain is Bifunctional protein FolD, found in Thioalkalivibrio sulfidiphilus (strain HL-EbGR7).